The primary structure comprises 472 residues: Ribulose bisphosphate carboxylase large chain (472 aa).

The substrate site is built by N120 and T170. The Proton acceptor role is filled by K172. Residue K174 participates in substrate binding. Residues K198, D200, and E201 each contribute to the Mg(2+) site. K198 carries the post-translational modification N6-carboxylysine. Catalysis depends on H291, which acts as the Proton acceptor. The substrate site is built by R292, H324, and S376. An Interacts with RbcX2 motif is present at residues 461-467 (EIKFEFE).

This sequence belongs to the RuBisCO large chain family. Type I subfamily. Heterohexadecamer of 8 large chains and 8 small chains; disulfide-linked. The disulfide link is formed within the large subunit homodimers. The exposed C-terminus binds in a cleft in the RbcX2 (shown with endogenous and Anabaena strain CA protein). RbcX2 is displaced by RbcS; as RbcX2 is removed RbcS mediates the ordering of an internal RbcL loop (Thr-64-Leu-70) in a catalytically active conformation. Mg(2+) is required as a cofactor. The disulfide bond which can form in the large chain dimeric partners within the hexadecamer appears to be associated with oxidative stress and protein turnover.

The protein localises to the carboxysome. It carries out the reaction 2 (2R)-3-phosphoglycerate + 2 H(+) = D-ribulose 1,5-bisphosphate + CO2 + H2O. It catalyses the reaction D-ribulose 1,5-bisphosphate + O2 = 2-phosphoglycolate + (2R)-3-phosphoglycerate + 2 H(+). Functionally, ruBisCO catalyzes two reactions: the carboxylation of D-ribulose 1,5-bisphosphate, the primary event in carbon dioxide fixation, as well as the oxidative fragmentation of the pentose substrate in the photorespiration process. Both reactions occur simultaneously and in competition at the same active site. The polypeptide is Ribulose bisphosphate carboxylase large chain (cbbL) (Synechococcus sp. (strain ATCC 27144 / PCC 6301 / SAUG 1402/1) (Anacystis nidulans)).